The chain runs to 413 residues: Replication factor C large subunit (413 aa).

ATP is bound at residue 54–61 (GPPGSGKT).

Belongs to the activator 1 small subunits family. RfcL subfamily. As to quaternary structure, heteromultimer composed of small subunits (RfcS) and large subunits (RfcL).

Its function is as follows. Part of the RFC clamp loader complex which loads the PCNA sliding clamp onto DNA. The polypeptide is Replication factor C large subunit (Thermofilum pendens (strain DSM 2475 / Hrk 5)).